The chain runs to 91 residues: ITCGQVSSSLAPCINYLRAGGVVPANCCNGVRSLNNAAKTTADRQAACNCLKSAFNSIKGLNLNLAAGLPGKCGVSVPYKISPSTDCKSVK.

4 disulfides stabilise this stretch: C3-C50, C13-C27, C28-C73, and C48-C87.

The protein belongs to the plant LTP family.

In terms of biological role, plant non-specific lipid-transfer proteins transfer phospholipids as well as galactolipids across membranes. May play a role in wax or cutin deposition in the cell walls of expanding epidermal cells and certain secretory tissues. This is Non-specific lipid-transfer protein 1 from Morus nigra (Black mulberry).